Reading from the N-terminus, the 344-residue chain is L-rhamnose-proton symporter (344 aa).

A run of 10 helical transmembrane segments spans residues 4-24 (AITM…CFYA), 38-58 (WSVG…ALLL), 68-88 (FNLS…IGNI), 101-121 (MGIG…TPII), 137-157 (TLLG…AGQL), 175-195 (LLLA…MNAA), 214-234 (LPSY…FCFI), 259-279 (ILLS…YAWG), 290-310 (MSWM…GLVL), and 321-341 (VAVL…VGLG).

Belongs to the L-rhamnose transporter (TC 2.A.7.6) family.

Its subcellular location is the cell inner membrane. The enzyme catalyses L-rhamnopyranose(in) + H(+)(in) = L-rhamnopyranose(out) + H(+)(out). In terms of biological role, uptake of L-rhamnose across the cytoplasmic membrane with the concomitant transport of protons into the cell (symport system). The sequence is that of L-rhamnose-proton symporter from Salmonella gallinarum (strain 287/91 / NCTC 13346).